We begin with the raw amino-acid sequence, 681 residues long: DNA-directed RNA polymerase subunit beta' (681 aa).

Residues C69, C71, C87, and C90 each coordinate Zn(2+). Residues D489, D491, and D493 each contribute to the Mg(2+) site.

Belongs to the RNA polymerase beta' chain family. RpoC1 subfamily. As to quaternary structure, in plastids the minimal PEP RNA polymerase catalytic core is composed of four subunits: alpha, beta, beta', and beta''. When a (nuclear-encoded) sigma factor is associated with the core the holoenzyme is formed, which can initiate transcription. It depends on Mg(2+) as a cofactor. Zn(2+) serves as cofactor.

The protein localises to the plastid. It localises to the chloroplast. The catalysed reaction is RNA(n) + a ribonucleoside 5'-triphosphate = RNA(n+1) + diphosphate. Functionally, DNA-dependent RNA polymerase catalyzes the transcription of DNA into RNA using the four ribonucleoside triphosphates as substrates. The sequence is that of DNA-directed RNA polymerase subunit beta' from Solanum bulbocastanum (Wild potato).